The following is a 226-amino-acid chain: PKHD-type hydroxylase PST_0995 (226 aa).

Positions 78 to 178 (KVFPPLFNCY…RLASFFWIQS (101 aa)) constitute a Fe2OG dioxygenase domain. Residues H96, D98, and H159 each coordinate Fe cation. R169 is a binding site for 2-oxoglutarate.

Fe(2+) is required as a cofactor. L-ascorbate serves as cofactor.

The chain is PKHD-type hydroxylase PST_0995 from Stutzerimonas stutzeri (strain A1501) (Pseudomonas stutzeri).